The sequence spans 170 residues: Small ribosomal subunit protein uS5 (170 aa).

The region spanning 13–76 (LLEKLVGVRR…ENARKNMISV (64 aa)) is the S5 DRBM domain.

Belongs to the universal ribosomal protein uS5 family. Part of the 30S ribosomal subunit. Contacts proteins S4 and S8.

With S4 and S12 plays an important role in translational accuracy. In terms of biological role, located at the back of the 30S subunit body where it stabilizes the conformation of the head with respect to the body. This is Small ribosomal subunit protein uS5 from Nitrosococcus oceani (strain ATCC 19707 / BCRC 17464 / JCM 30415 / NCIMB 11848 / C-107).